A 443-amino-acid chain; its full sequence is Threonine/serine transporter TdcC (443 aa).

The next 11 helical transmembrane spans lie at 22 to 42, 44 to 64, 97 to 117, 140 to 160, 163 to 183, 207 to 227, 261 to 281, 311 to 331, 366 to 386, 389 to 409, and 423 to 443; these read TTWT…FFPI, AGFG…PIAF, GVVI…IYGV, FVAL…KDLM, VMSY…LSLI, ILIT…FSPI, MLMV…LSPA, FAIT…FKSF, ISMI…PNIL, IEAM…MYAI, and DNVF…YKLF.

The protein belongs to the amino acid/polyamine transporter 2 family. SdaC/TdcC subfamily.

The protein localises to the cell inner membrane. The catalysed reaction is L-threonine(in) + H(+)(in) = L-threonine(out) + H(+)(out). It catalyses the reaction L-serine(in) + H(+)(in) = L-serine(out) + H(+)(out). In terms of biological role, involved in the import of threonine and serine into the cell, with the concomitant import of a proton (symport system). The chain is Threonine/serine transporter TdcC from Shigella sonnei (strain Ss046).